The following is a 188-amino-acid chain: UPF0301 protein CPn_0139/CP_0633/CPj0139/CpB0140 (188 aa).

It belongs to the UPF0301 (AlgH) family.

The sequence is that of UPF0301 protein CPn_0139/CP_0633/CPj0139/CpB0140 from Chlamydia pneumoniae (Chlamydophila pneumoniae).